Consider the following 260-residue polypeptide: Ribonuclease PH (260 aa).

Residues R87 and 125 to 127 (GTR) each bind phosphate. The segment at 232 to 260 (LAAPPAAGPPAPERAGAGSGSGGKGTGSR) is disordered. Positions 248–260 (AGSGSGGKGTGSR) are enriched in gly residues.

This sequence belongs to the RNase PH family. In terms of assembly, homohexameric ring arranged as a trimer of dimers.

The catalysed reaction is tRNA(n+1) + phosphate = tRNA(n) + a ribonucleoside 5'-diphosphate. Its function is as follows. Phosphorolytic 3'-5' exoribonuclease that plays an important role in tRNA 3'-end maturation. Removes nucleotide residues following the 3'-CCA terminus of tRNAs; can also add nucleotides to the ends of RNA molecules by using nucleoside diphosphates as substrates, but this may not be physiologically important. Probably plays a role in initiation of 16S rRNA degradation (leading to ribosome degradation) during starvation. The sequence is that of Ribonuclease PH from Parafrankia sp. (strain EAN1pec).